Here is a 247-residue protein sequence, read N- to C-terminus: Sugar fermentation stimulation protein homolog (247 aa).

This sequence belongs to the SfsA family.

This chain is Sugar fermentation stimulation protein homolog, found in Aeromonas hydrophila subsp. hydrophila (strain ATCC 7966 / DSM 30187 / BCRC 13018 / CCUG 14551 / JCM 1027 / KCTC 2358 / NCIMB 9240 / NCTC 8049).